The chain runs to 215 residues: Thiamine-phosphate synthase (215 aa).

Residues 37–41 and Asn69 contribute to the 4-amino-2-methyl-5-(diphosphooxymethyl)pyrimidine site; that span reads QLRIK. Mg(2+) is bound by residues Asp70 and Asp89. Ser108 contributes to the 4-amino-2-methyl-5-(diphosphooxymethyl)pyrimidine binding site. 134 to 136 is a binding site for 2-[(2R,5Z)-2-carboxy-4-methylthiazol-5(2H)-ylidene]ethyl phosphate; sequence TQT. Residue Lys137 participates in 4-amino-2-methyl-5-(diphosphooxymethyl)pyrimidine binding. Residues Gly166 and 186-187 contribute to the 2-[(2R,5Z)-2-carboxy-4-methylthiazol-5(2H)-ylidene]ethyl phosphate site; that span reads VS.

It belongs to the thiamine-phosphate synthase family. Requires Mg(2+) as cofactor.

It carries out the reaction 2-[(2R,5Z)-2-carboxy-4-methylthiazol-5(2H)-ylidene]ethyl phosphate + 4-amino-2-methyl-5-(diphosphooxymethyl)pyrimidine + 2 H(+) = thiamine phosphate + CO2 + diphosphate. The enzyme catalyses 2-(2-carboxy-4-methylthiazol-5-yl)ethyl phosphate + 4-amino-2-methyl-5-(diphosphooxymethyl)pyrimidine + 2 H(+) = thiamine phosphate + CO2 + diphosphate. It catalyses the reaction 4-methyl-5-(2-phosphooxyethyl)-thiazole + 4-amino-2-methyl-5-(diphosphooxymethyl)pyrimidine + H(+) = thiamine phosphate + diphosphate. Its pathway is cofactor biosynthesis; thiamine diphosphate biosynthesis; thiamine phosphate from 4-amino-2-methyl-5-diphosphomethylpyrimidine and 4-methyl-5-(2-phosphoethyl)-thiazole: step 1/1. In terms of biological role, condenses 4-methyl-5-(beta-hydroxyethyl)thiazole monophosphate (THZ-P) and 2-methyl-4-amino-5-hydroxymethyl pyrimidine pyrophosphate (HMP-PP) to form thiamine monophosphate (TMP). The sequence is that of Thiamine-phosphate synthase from Yersinia pseudotuberculosis serotype I (strain IP32953).